The sequence spans 306 residues: uncharacterized protein (306 aa).

Positions 277-306 (TEIIQNYKIANELKKEKQQNKKKNSIELEE) form a coiled coil.

This is an uncharacterized protein from Saccharolobus islandicus (Sulfolobus islandicus).